The chain runs to 934 residues: Bifunctional uridylyltransferase/uridylyl-removing enzyme (934 aa).

The interval 1–379 is uridylyltransferase; that stretch reads MSAHDLKLEE…TFSRRKRKLS (379 aa). Residues 380–736 form a uridylyl-removing region; sequence DDGAFISENH…AKPHAFEAVT (357 aa). Positions 496 to 613 constitute an HD domain; sequence VDEHLLRCIA…IDFADTVQTM (118 aa). ACT domains follow at residues 737–818 and 848–931; these read EITV…DMLA and VIEV…RSPQ.

This sequence belongs to the GlnD family. Mg(2+) is required as a cofactor.

It catalyses the reaction [protein-PII]-L-tyrosine + UTP = [protein-PII]-uridylyl-L-tyrosine + diphosphate. It carries out the reaction [protein-PII]-uridylyl-L-tyrosine + H2O = [protein-PII]-L-tyrosine + UMP + H(+). Uridylyltransferase (UTase) activity is inhibited by glutamine, while glutamine activates uridylyl-removing (UR) activity. Modifies, by uridylylation and deuridylylation, the PII regulatory proteins (GlnB and homologs), in response to the nitrogen status of the cell that GlnD senses through the glutamine level. Under low glutamine levels, catalyzes the conversion of the PII proteins and UTP to PII-UMP and PPi, while under higher glutamine levels, GlnD hydrolyzes PII-UMP to PII and UMP (deuridylylation). Thus, controls uridylylation state and activity of the PII proteins, and plays an important role in the regulation of nitrogen assimilation and metabolism. This Brucella suis (strain ATCC 23445 / NCTC 10510) protein is Bifunctional uridylyltransferase/uridylyl-removing enzyme.